We begin with the raw amino-acid sequence, 30 residues long: Acidic phospholipase A2 homolog cannitoxin gamma chain (30 aa).

In terms of assembly, heterotrimer of alpha, beta, and gamma chains; non-covalently linked. In terms of processing, glycosylated. As to expression, expressed by the venom gland.

It localises to the secreted. Functionally, heterotrimer: Snake venom phospholipase A2 (PLA2) heterotrimer that acts as a potent presynaptic neurotoxin by blocking synaptic transmission and synaptic vesicle recycling. Enzymatic activity is essential for the neurotoxic effects. May act by binding in a calcium-dependent fashion to neurotonal pentraxin-1 (NPTX1) and neurotonal pentraxin-2 (NPTX2), but not to neuronal pentraxin receptor (NPTXR). Also binds to taipoxin-associated calcium binding protein 49 (RCN2), a protein localized in the lumen of endoplasmic reticulum. In terms of biological role, monomer (gamma chain): Snake venom phospholipase A2 homolog that is neither toxic nor enzymatically active. Does not bind calcium. This chain is Acidic phospholipase A2 homolog cannitoxin gamma chain, found in Oxyuranus scutellatus canni (Papuan taipan).